We begin with the raw amino-acid sequence, 196 residues long: Nodulation protein A (196 aa).

Belongs to the NodA family.

The protein localises to the cytoplasm. Its function is as follows. N-acyltransferase required for nodulation. Acts in the production of a small, heat-stable compound (Nod) that stimulates mitosis in various plant protoplasts. This chain is Nodulation protein A, found in Sinorhizobium terangae.